Here is a 547-residue protein sequence, read N- to C-terminus: Threonine synthase (547 aa).

Residue K117 is modified to N6-(pyridoxal phosphate)lysine. Pyridoxal 5'-phosphate is bound by residues G272, N273, F274, D276, and T471.

This sequence belongs to the threonine synthase family. It depends on pyridoxal 5'-phosphate as a cofactor.

The catalysed reaction is O-phospho-L-homoserine + H2O = L-threonine + phosphate. The protein operates within amino-acid biosynthesis; L-threonine biosynthesis; L-threonine from L-aspartate: step 5/5. Its function is as follows. Catalyzes the gamma-elimination of phosphate from L-phosphohomoserine and the beta-addition of water to produce L-threonine. The polypeptide is Threonine synthase (Cryptococcus neoformans var. grubii serotype A (strain H99 / ATCC 208821 / CBS 10515 / FGSC 9487) (Filobasidiella neoformans var. grubii)).